Here is a 387-residue protein sequence, read N- to C-terminus: MGMDIHLQAGELAGWLNDAALPLWRQKGFDGEGGGFVETIDMKGEPTRDDRRSRVQPRQVYCFAAAGRRGWDGDWRTAAEGGLLYFDRVYGQPGGFYGALANADGKLIDASFDLYNQAFALLAFAHLAEVLPERGAEMVGRSDKLRRQLEARCKHPLAGFEEDDPPRLPLGSNPHMHLFEACLASEEVEGFDRVAWANLADEIAHLAMDRFIDAESGALREFFDHDWAPFPGEKGRIVEPGHLFEWAWLLLRWAERRGNAQAIVKARRLFEIGEKDGTCPDRDVVVMTLFDDFSVADPTARLWPQTEWLKAAIRFAALTEGAERERYLASAGRAAAALQRFLNVPVRGLWRDKQKADGSFVEEPAPASTFYHILCAIYELEDCLKRM.

It belongs to the N-acylglucosamine 2-epimerase family.

It carries out the reaction D-mannose 6-phosphate = D-fructose 6-phosphate. The polypeptide is Mannose-6-phosphate isomerase (pmi) (Rhizobium meliloti (strain 1021) (Ensifer meliloti)).